The sequence spans 1735 residues: Inactive tyrosine-protein kinase PEAK1 (1735 aa).

Disordered regions lie at residues 26–66 and 111–145; these read LHQL…PPVA and LSQK…KISN. Composition is skewed to polar residues over residues 111 to 121 and 130 to 145; these read LSQKPLNNNSE and DPQQ…KISN. At Ser282 the chain carries Phosphoserine. Disordered stretches follow at residues 324–410, 491–514, and 537–580; these read NSGV…SVKV, GRPK…LTPG, and SPRQ…SKTI. A compositionally biased stretch (low complexity) spans 325–336; sequence SGVSYGQGSVQS. Residues 337-365 are compositionally biased toward polar residues; the sequence is TISSDCTSPGSSFTEESRSETASSLSQKV. Positions 367–378 are enriched in low complexity; the sequence is NGGISPGNPGNS. Residues 384–393 show a composition bias toward polar residues; the sequence is TESNFESPPG. The segment covering 498 to 509 has biased composition (low complexity); that stretch reads SSSTPNSPVTSP. Phosphoserine is present on residues Ser537, Ser569, and Ser584. The segment covering 566 to 580 has biased composition (polar residues); that stretch reads APTSPTATNISSKTI. Tyr632 and Tyr638 each carry phosphotyrosine. Ser645 bears the Phosphoserine mark. Phosphotyrosine is present on Tyr662. 3 disordered regions span residues 663–762, 800–919, and 1019–1097; these read EEIE…REKA, PDAD…AADA, and RNSE…SATY. Composition is skewed to polar residues over residues 704-735, 745-757, and 819-839; these read QEFN…QRPT, AQGS…SSNS, and LFTS…SPTA. A phosphoserine mark is found at Ser824 and Ser825. Low complexity predominate over residues 847 to 863; that stretch reads TKPVTSPPSKLVTSAQS. The span at 864 to 873 shows a compositional bias: pro residues; sequence EPPPPFPPPR. A compositionally biased stretch (polar residues) spans 879-901; it reads YHASNLLQRHFTNWTKPTSPTRS. Residue Ser897 is modified to Phosphoserine. Basic and acidic residues-rich tracts occupy residues 902–919 and 1037–1055; these read TEAE…AADA and ACSR…RDPR. A compositionally biased stretch (acidic residues) spans 1076 to 1086; it reads EREEEKDDTLD. Thr1141 is subject to Phosphothreonine. Position 1177 is a phosphotyrosine (Tyr1177). Residues 1274-1300 are required for homodimerization; the sequence is EVVGKLRSLHTDALKRLAVKCEDLFMA. The 363-residue stretch at 1302 to 1664 folds into the Protein kinase domain; it reads QKDQLRFGVD…LLWGPREDLF (363 aa). Ser1363 carries the phosphoserine modification. Residues 1394–1445 form a disordered region; that stretch reads WEDPDAPEKAEDGTEDSEEEGKAETLGGNPEPCSETEPSQKENQRVTNRKQR. Positions 1659-1732 are required for homodimerization; it reads PREDLFQIFT…DSLSYIVKIL (74 aa).

It belongs to the protein kinase superfamily. Homodimer. Interacts with BCAR1 and CRK. Interacts with PRAG1. Interacts (when phosphorylated at Tyr-1177) with SHC1 (via PID domain). Found in a complex with PPP1CA, PPP1CC and SHC1. Interacts (when phosphorylated at Tyr-632) with tensin TNS3 (when phosphorylated on the SH2 domain); TNS3 also interacts with integrins ITGB1, ITGB3 and ITGB5 and mediates their association with PEAK1. Phosphorylated on tyrosine in a CSK-dependent manner in response to adhesion to fibronectin and to EGF stimulation. Phosphorylation at Tyr-662 by a Src family kinase controls subcellular localization to focal adhesion and focal adhesion dynamics. Phosphorylation at Tyr-1177 is essential for binding to SHC1. Phosphorylation at Tyr-632 promotes interaction with tensin TNS3.

Its subcellular location is the cytoplasm. The protein resides in the cytoskeleton. It is found in the cell junction. It localises to the focal adhesion. Probable catalytically inactive kinase. Scaffolding protein that regulates the cytoskeleton to control cell spreading and migration by modulating focal adhesion dynamics. Acts as a scaffold for mediating EGFR signaling. The protein is Inactive tyrosine-protein kinase PEAK1 (Peak1) of Mus musculus (Mouse).